A 179-amino-acid chain; its full sequence is Large ribosomal subunit protein uL6 (179 aa).

Belongs to the universal ribosomal protein uL6 family. In terms of assembly, part of the 50S ribosomal subunit.

This protein binds to the 23S rRNA, and is important in its secondary structure. It is located near the subunit interface in the base of the L7/L12 stalk, and near the tRNA binding site of the peptidyltransferase center. The chain is Large ribosomal subunit protein uL6 from Buchnera aphidicola subsp. Baizongia pistaciae (strain Bp).